A 737-amino-acid polypeptide reads, in one-letter code: Angiotensin-converting enzyme-like protein Ace3 (737 aa).

Positions 1–23 (MNLPWALLLVLLSHRQLLPWLRT) are cleaved as a signal peptide. Residues 24-639 (VGETSLNDFY…TDTEPEQAYL (616 aa)) lie on the Extracellular side of the membrane. The region spanning 32–611 (FYSEAQAKLF…VKQGDTLGWP (580 aa)) is the Peptidase M2 domain. An intrachain disulfide couples cysteine 146 to cysteine 152. Chloride contacts are provided by arginine 180 and tyrosine 218. Cysteine 346 and cysteine 364 are joined by a disulfide. Histidine 377 and histidine 381 together coordinate Zn(2+). The N-linked (GlcNAc...) asparagine glycan is linked to asparagine 390. A Zn(2+)-binding site is contributed by glutamate 405. Chloride contacts are provided by tryptophan 479, arginine 483, and arginine 516. A disulfide bond links cysteine 532 and cysteine 544. A helical membrane pass occupies residues 640 to 660 (GQWVLLSMSFFMLVLILALGF). Over 661 to 700 (RLHYLEKQLLDEDTMILKTLPYSYFLGIAMEPHQAARKQW) the chain is Cytoplasmic. The helical transmembrane segment at 701–721 (LLLGLCCILMLCCIGLLIRIV) threads the bilayer. At 722 to 737 (TQNTENTPWMKNEGQS) the chain is on the extracellular side.

The protein belongs to the peptidase M2 family. As to quaternary structure, interacts with IZUMO1. It depends on Zn(2+) as a cofactor. Expressed in sperm and testis (at protein level). Expressed in heart and testis. Not detected in kidney, lung, liver, brain, ovary, spleen and thymus.

Its subcellular location is the cytoplasmic vesicle. It is found in the secretory vesicle. It localises to the acrosome membrane. This Mus musculus (Mouse) protein is Angiotensin-converting enzyme-like protein Ace3.